The chain runs to 1275 residues: uncharacterized protein (1275 aa).

This is an uncharacterized protein from Homo sapiens (Human).